A 155-amino-acid polypeptide reads, in one-letter code: Peptide deformylase (155 aa).

2 residues coordinate Fe cation: Cys88 and His130. Glu131 is a catalytic residue. Residue His134 participates in Fe cation binding.

Belongs to the polypeptide deformylase family. Requires Fe(2+) as cofactor.

It catalyses the reaction N-terminal N-formyl-L-methionyl-[peptide] + H2O = N-terminal L-methionyl-[peptide] + formate. In terms of biological role, removes the formyl group from the N-terminal Met of newly synthesized proteins. Requires at least a dipeptide for an efficient rate of reaction. N-terminal L-methionine is a prerequisite for activity but the enzyme has broad specificity at other positions. The protein is Peptide deformylase of Pelotomaculum thermopropionicum (strain DSM 13744 / JCM 10971 / SI).